The primary structure comprises 365 residues: Protein BZR1 homolog 2 (365 aa).

Positions 1–30 are enriched in gly residues; sequence MATGGGGGGGGMGGGGVGGGAGAAGVGVGG. 4 disordered regions span residues 1–45, 113–154, 191–236, and 344–365; these read MATG…KRRE, SPSP…NMAN, SAPV…TPPS, and HEDS…RAAA. The required for DNA-binding stretch occupies residues 31–113; the sequence is RMPTWREREN…RMEVIGCSVS (83 aa). Over residues 113–144 the composition is skewed to low complexity; the sequence is SPSPCSSYQPSPRASYNASPTSSSFPSGASSP. Composition is skewed to polar residues over residues 215–233 and 356–365; these read SNVQ…VNST and LGSSRTRAAA.

It belongs to the BZR/LAT61 family. In terms of assembly, interacts with PUB24.

Functionally, may function in brassinosteroid signaling. This is Protein BZR1 homolog 2 from Oryza sativa subsp. japonica (Rice).